Here is a 296-residue protein sequence, read N- to C-terminus: Putative gluconeogenesis factor (296 aa).

The protein belongs to the gluconeogenesis factor family.

The protein localises to the cytoplasm. Functionally, required for morphogenesis under gluconeogenic growth conditions. The protein is Putative gluconeogenesis factor of Vibrio cholerae serotype O1 (strain ATCC 39315 / El Tor Inaba N16961).